Here is a 185-residue protein sequence, read N- to C-terminus: N-alpha-acetyltransferase 30 (185 aa).

The N-acetyltransferase domain maps to 31–179 (IEYIPYQGES…DAVRLLLPLN (149 aa)).

Belongs to the acetyltransferase family. MAK3 subfamily.

Probable catalytic component of a complex displaying alpha (N-terminal) acetyltransferase activity. The sequence is that of N-alpha-acetyltransferase 30 from Dictyostelium discoideum (Social amoeba).